The chain runs to 569 residues: 3-(3-hydroxy-phenyl)propionate/3-hydroxycinnamic acid hydroxylase (569 aa).

FAD is bound by residues 12 to 41 (DVVV…VVDE) and 277 to 287 (FRKGRLMLAGD).

Belongs to the PheA/TfdB FAD monooxygenase family. FAD serves as cofactor.

It catalyses the reaction 3-(3-hydroxyphenyl)propanoate + NADH + O2 + H(+) = 3-(2,3-dihydroxyphenyl)propanoate + NAD(+) + H2O. The enzyme catalyses (2E)-3-(3-hydroxyphenyl)prop-2-enoate + NADH + O2 + H(+) = (2E)-3-(2,3-dihydroxyphenyl)prop-2-enoate + NAD(+) + H2O. It participates in aromatic compound metabolism; 3-phenylpropanoate degradation. Its function is as follows. Catalyzes the insertion of one atom of molecular oxygen into position 2 of the phenyl ring of 3-(3-hydroxyphenyl)propionate (3-HPP) and hydroxycinnamic acid (3HCI). The protein is 3-(3-hydroxy-phenyl)propionate/3-hydroxycinnamic acid hydroxylase of Mycolicibacterium vanbaalenii (strain DSM 7251 / JCM 13017 / BCRC 16820 / KCTC 9966 / NRRL B-24157 / PYR-1) (Mycobacterium vanbaalenii).